The following is a 349-amino-acid chain: GTP 3',8-cyclase (349 aa).

The Radical SAM core domain maps to 24–250 (PFGRAVTYLR…DIPYRTGGPA (227 aa)). Residue arginine 33 participates in GTP binding. Cysteine 40 and cysteine 44 together coordinate [4Fe-4S] cluster. Residue tyrosine 46 coordinates S-adenosyl-L-methionine. Cysteine 47 contacts [4Fe-4S] cluster. Arginine 82 contributes to the GTP binding site. Glycine 86 contacts S-adenosyl-L-methionine. Threonine 116 lines the GTP pocket. Serine 140 contacts S-adenosyl-L-methionine. A GTP-binding site is contributed by lysine 176. Methionine 210 contributes to the S-adenosyl-L-methionine binding site. Cysteine 273 and cysteine 276 together coordinate [4Fe-4S] cluster. GTP is bound at residue 278–280 (RVR). Residue cysteine 290 participates in [4Fe-4S] cluster binding.

This sequence belongs to the radical SAM superfamily. MoaA family. In terms of assembly, monomer and homodimer. The cofactor is [4Fe-4S] cluster.

It carries out the reaction GTP + AH2 + S-adenosyl-L-methionine = (8S)-3',8-cyclo-7,8-dihydroguanosine 5'-triphosphate + 5'-deoxyadenosine + L-methionine + A + H(+). Its pathway is cofactor biosynthesis; molybdopterin biosynthesis. Catalyzes the cyclization of GTP to (8S)-3',8-cyclo-7,8-dihydroguanosine 5'-triphosphate. The polypeptide is GTP 3',8-cyclase (Rhizobium meliloti (strain 1021) (Ensifer meliloti)).